Consider the following 119-residue polypeptide: Large ribosomal subunit protein uL14c (119 aa).

The protein belongs to the universal ribosomal protein uL14 family. As to quaternary structure, part of the 50S ribosomal subunit.

It localises to the plastid. The protein localises to the chloroplast. In terms of biological role, binds to 23S rRNA. The sequence is that of Large ribosomal subunit protein uL14c from Ostreococcus tauri.